Consider the following 163-residue polypeptide: MRLTSKGRYAVTAMLDVALNSETGPVPLADISERQGISLSYLEQLFSRLRKNGLVSSVRGPGGGYLLGKDAGSIAVGEVISAVDESVDATRCQGKGGCQGGDKCLTHALWRDLSDRLTGFLNNITLGELVNNQEVLDVSGRQQSHETQRTTRAQDAIDVKLRA.

Residues 2 to 131 (RLTSKGRYAV…NNITLGELVN (130 aa)) enclose the HTH rrf2-type domain. Positions 28–51 (LADISERQGISLSYLEQLFSRLRK) form a DNA-binding region, H-T-H motif. Residues Cys92, Cys98, and Cys104 each contribute to the [2Fe-2S] cluster site.

The cofactor is [2Fe-2S] cluster.

In terms of biological role, regulates the transcription of several operons and genes involved in the biogenesis of Fe-S clusters and Fe-S-containing proteins. This Enterobacter sp. (strain 638) protein is HTH-type transcriptional regulator IscR.